Reading from the N-terminus, the 90-residue chain is Probable small nuclear ribonucleoprotein F (90 aa).

In terms of domain architecture, Sm spans N7 to A80.

Belongs to the snRNP Sm proteins family. SmF/LSm6 subfamily.

The protein localises to the nucleus. The protein resides in the cytoplasm. Plays a role in pre-mRNA splicing as a core component of the spliceosomal U1, U2, U4 and U5 small nuclear ribonucleoproteins (snRNPs), the building blocks of the spliceosome. The protein is Probable small nuclear ribonucleoprotein F of Neurospora crassa (strain ATCC 24698 / 74-OR23-1A / CBS 708.71 / DSM 1257 / FGSC 987).